The chain runs to 146 residues: Large ribosomal subunit protein uL13 (146 aa).

It belongs to the universal ribosomal protein uL13 family. As to quaternary structure, part of the 50S ribosomal subunit.

Its function is as follows. This protein is one of the early assembly proteins of the 50S ribosomal subunit, although it is not seen to bind rRNA by itself. It is important during the early stages of 50S assembly. In Methylobacillus flagellatus (strain ATCC 51484 / DSM 6875 / VKM B-1610 / KT), this protein is Large ribosomal subunit protein uL13.